An 88-amino-acid chain; its full sequence is Potassium channel toxin MeuTXKbeta3-meucin-24 (88 aa).

Residues 1–22 (MMKQQFFLFLAVIVMISSVIEA) form the signal peptide. The region spanning 55 to 88 (EYACPVIEKWCEDHCQAKNAIGRCENTECKCLSK) is the BetaSPN-type CS-alpha/beta domain. 3 disulfide bridges follow: cysteine 58/cysteine 78, cysteine 65/cysteine 83, and cysteine 69/cysteine 85.

It belongs to the long chain scorpion toxin family. Class 2 subfamily. Expressed by the venom gland.

It is found in the secreted. In terms of biological role, inhibits voltage-gated potassium channels. Its function is as follows. The synthetic meucin-24 inhibits the development of P.berghei ookinetes, kills intraerythrocytic P.falciparum, and is cytotoxic to the Drosophila S2 cells at micromolar concentrations. No antibacterial, antifungal and hemolytic activities have been found at micromolar concentrations. In Mesobuthus eupeus (Lesser Asian scorpion), this protein is Potassium channel toxin MeuTXKbeta3-meucin-24.